Reading from the N-terminus, the 414-residue chain is Histidine--tRNA ligase (414 aa).

Belongs to the class-II aminoacyl-tRNA synthetase family. In terms of assembly, homodimer.

The protein resides in the cytoplasm. It catalyses the reaction tRNA(His) + L-histidine + ATP = L-histidyl-tRNA(His) + AMP + diphosphate + H(+). The protein is Histidine--tRNA ligase of Endomicrobium trichonymphae.